A 150-amino-acid chain; its full sequence is uncharacterized protein (150 aa).

The first 23 residues, 1 to 23 (MYSILIACLVLLLCLIIYVGHRA), serve as a signal peptide directing secretion.

This sequence belongs to the asfivirus EP152R family.

It localises to the virion. This is an uncharacterized protein from African swine fever virus (isolate Tick/South Africa/Pretoriuskop Pr4/1996) (ASFV).